The chain runs to 208 residues: Putative 3-methyladenine DNA glycosylase (208 aa).

This sequence belongs to the DNA glycosylase MPG family.

The sequence is that of Putative 3-methyladenine DNA glycosylase from Prosthecochloris aestuarii (strain DSM 271 / SK 413).